We begin with the raw amino-acid sequence, 155 residues long: Transcription antitermination protein NusB (155 aa).

This sequence belongs to the NusB family.

Involved in transcription antitermination. Required for transcription of ribosomal RNA (rRNA) genes. Binds specifically to the boxA antiterminator sequence of the ribosomal RNA (rrn) operons. The sequence is that of Transcription antitermination protein NusB from Ralstonia nicotianae (strain ATCC BAA-1114 / GMI1000) (Ralstonia solanacearum).